The following is a 173-amino-acid chain: Large ribosomal subunit protein uL16 (173 aa).

This sequence belongs to the universal ribosomal protein uL16 family.

The polypeptide is Large ribosomal subunit protein uL16 (Methanococcus maripaludis (strain C5 / ATCC BAA-1333)).